The following is a 374-amino-acid chain: 5-methylthioribulose-1-phosphate isomerase (374 aa).

It belongs to the RuBisCO large chain family. Type IV subfamily.

It carries out the reaction 5-(methylsulfanyl)-D-ribulose 1-phosphate = S-methyl-1-thio-D-xylulose 5-phosphate. It catalyses the reaction 5-(methylsulfanyl)-D-ribulose 1-phosphate = 1-(methylsulfanyl)ribulose 5-phosphate. It functions in the pathway amino-acid biosynthesis; L-methionine biosynthesis via salvage pathway. Its pathway is metabolic intermediate biosynthesis; 1-deoxy-D-xylulose 5-phosphate biosynthesis. Its function is as follows. Catalyzes the conversion of 5-methylthio-D-ribulose 1-phosphate (MTRu-1P) to a 3:1 mixture of 1-methylthioxylulose 5-phosphate (MTXu-5P) and 1-methylthioribulose 5-phosphate (MTRu-5P). Involved in the MTA-isoprenoid shunt of the methionine salvage pathway. The chain is 5-methylthioribulose-1-phosphate isomerase from Rhodospirillum rubrum (strain ATCC 11170 / ATH 1.1.1 / DSM 467 / LMG 4362 / NCIMB 8255 / S1).